The following is a 555-amino-acid chain: MSKSIEQFPKDLSSPLIQLKSSVEKNSKLHIKELFALEPERFQNYSVKFDQLFFDYSKQRITKNILEQLVALANNKQLTQWINRLFSQDKINCTEQREAMHWALRLPSEYSKFPELTKQVHIQLQRMYTLVEKIHAGQYRGATGEVIQDVVNIGVGGSDLGPHMVTHALADFKVKTAKPLNVHFVSTMDGSQLSDLLHQLRPETTLFIISSKSFGTIDTLSNAQTVRQWLEKALGKHDRVVKSHFIGVSTKAEKMNEWGIAPDNQLLLWDWVGGRYSLWSCIGFPIALTIGIDGFQQLLAGAHAVDEHFQNTSFERNIPVLMALLGIWNNNFLNIQTHAVLPYDGRLKYLAAYLQQLEMESNGKSVQRDGQKVELDTCPIVWGEVGPNAQHAFYQLLHQGTQAVSCDFIAPIQRYNADHFTYVENAEALIEQHHLALSNCLAQSRLLAFGNEALDVKELEKLPIYKQYEGNQPSSTLLLDELNPYNLGMLIALYEHKVFVQSVIWNINPFDQWGVEKGKQIANQLLPILNGAQNDLSTLDASTRGLIKILLGKAE.

E360 serves as the catalytic Proton donor. Residues H391 and K519 contribute to the active site.

This sequence belongs to the GPI family.

The protein localises to the cytoplasm. It catalyses the reaction alpha-D-glucose 6-phosphate = beta-D-fructose 6-phosphate. It participates in carbohydrate biosynthesis; gluconeogenesis. Its pathway is carbohydrate degradation; glycolysis; D-glyceraldehyde 3-phosphate and glycerone phosphate from D-glucose: step 2/4. Functionally, catalyzes the reversible isomerization of glucose-6-phosphate to fructose-6-phosphate. The polypeptide is Glucose-6-phosphate isomerase (Acinetobacter baumannii (strain AB307-0294)).